A 391-amino-acid polypeptide reads, in one-letter code: tRNA-specific 2-thiouridylase MnmA (391 aa).

ATP-binding positions include 9 to 16 (GMSGGVDS) and Met35. An interaction with target base in tRNA region spans residues 95–97 (NPD). Cys100 functions as the Nucleophile in the catalytic mechanism. Cys100 and Cys196 are oxidised to a cystine. Gly124 is an ATP binding site. An interaction with tRNA region spans residues 146–148 (KDQ). The active-site Cysteine persulfide intermediate is the Cys196. Positions 308–309 (RY) are interaction with tRNA.

It belongs to the MnmA/TRMU family.

The protein localises to the cytoplasm. The enzyme catalyses S-sulfanyl-L-cysteinyl-[protein] + uridine(34) in tRNA + AH2 + ATP = 2-thiouridine(34) in tRNA + L-cysteinyl-[protein] + A + AMP + diphosphate + H(+). Catalyzes the 2-thiolation of uridine at the wobble position (U34) of tRNA, leading to the formation of s(2)U34. This chain is tRNA-specific 2-thiouridylase MnmA, found in Burkholderia orbicola (strain MC0-3).